A 1296-amino-acid polypeptide reads, in one-letter code: Protein STU1 (1296 aa).

Disordered stretches follow at residues 258–287 (ATSAPVLSPPAPTTFAPTTRSQFNSSHGAD), 735–793 (LSQT…PPVT), 888–946 (ALQQ…HISA), and 953–972 (TTSHRVLSSTPSRRAPTNGV). A compositionally biased stretch (polar residues) spans 277–287 (RSQFNSSHGAD). Composition is skewed to low complexity over residues 755 to 782 (SARSRAISSSSYSSQGSSSSARMQGAAS), 900 to 919 (TISTSSTSSTNSSTTPASAS), and 933 to 946 (HSPSPSASASHISA). The segment covering 953–964 (TTSHRVLSSTPS) has biased composition (polar residues).

Belongs to the CLASP family. In terms of assembly, interacts with microtubules.

It localises to the cytoplasm. Its subcellular location is the cytoskeleton. The protein resides in the nucleus. It is found in the spindle. In terms of biological role, microtubule binding protein that promotes the stabilization of dynamic microtubules. Required for mitotic spindle formation. This is Protein STU1 (STU1) from Mycosarcoma maydis (Corn smut fungus).